Here is a 166-residue protein sequence, read N- to C-terminus: Putative pre-16S rRNA nuclease (166 aa).

The protein belongs to the YqgF nuclease family.

The protein localises to the cytoplasm. Its function is as follows. Could be a nuclease involved in processing of the 5'-end of pre-16S rRNA. The polypeptide is Putative pre-16S rRNA nuclease (Mesorhizobium japonicum (strain LMG 29417 / CECT 9101 / MAFF 303099) (Mesorhizobium loti (strain MAFF 303099))).